A 113-amino-acid chain; its full sequence is DNA-binding protein PTO0204 (113 aa).

It belongs to the PDCD5 family.

The protein is DNA-binding protein PTO0204 of Picrophilus torridus (strain ATCC 700027 / DSM 9790 / JCM 10055 / NBRC 100828 / KAW 2/3).